Here is a 350-residue protein sequence, read N- to C-terminus: Heat-inducible transcription repressor HrcA (350 aa).

Belongs to the HrcA family.

In terms of biological role, negative regulator of class I heat shock genes (grpE-dnaK-dnaJ and groELS operons). Prevents heat-shock induction of these operons. The polypeptide is Heat-inducible transcription repressor HrcA (Methylococcus capsulatus (strain ATCC 33009 / NCIMB 11132 / Bath)).